We begin with the raw amino-acid sequence, 186 residues long: Ribosome-recycling factor (186 aa).

This sequence belongs to the RRF family.

Its subcellular location is the cytoplasm. Responsible for the release of ribosomes from messenger RNA at the termination of protein biosynthesis. May increase the efficiency of translation by recycling ribosomes from one round of translation to another. In Leptothrix cholodnii (strain ATCC 51168 / LMG 8142 / SP-6) (Leptothrix discophora (strain SP-6)), this protein is Ribosome-recycling factor.